Reading from the N-terminus, the 317-residue chain is 8-oxo-(d)GTP phosphatase (317 aa).

A Nudix hydrolase domain is found at 15–148; it reads RIVYAAGAVL…DRKVLCRFAK (134 aa). Substrate is bound by residues 43 to 46, Asp-48, and 53 to 55; these read RPRY and KGK. Lys-53, Glu-69, and Glu-73 together coordinate Mg(2+). A Nudix box motif is present at residues 54-75; sequence GKVDPGETAPVGAVREILEETG. Positions 89, 99, 118, and 136 each coordinate substrate. A Mg(2+)-binding site is contributed by Glu-118.

Belongs to the Nudix hydrolase family. It depends on Mg(2+) as a cofactor.

It catalyses the reaction 8-oxo-dGTP + H2O = 8-oxo-dGDP + phosphate + H(+). The catalysed reaction is 8-oxo-GTP + H2O = 8-oxo-GDP + phosphate + H(+). Functionally, catalyzes the conversion of 8-oxo-dGTP to 8-oxo-dGDP, and 8-oxo-GTP to 8-oxo-GDP. The protein is 8-oxo-(d)GTP phosphatase of Mycobacterium tuberculosis (strain CDC 1551 / Oshkosh).